The chain runs to 347 residues: Large ribosomal subunit protein uL10 (347 aa).

The disordered stretch occupies residues 310 to 347 (ATVAAPAAEEEKKEEEPEEEEEDHAEEDGMAGLGALFG). The segment covering 325 to 338 (EPEEEEEDHAEEDG) has biased composition (acidic residues).

This sequence belongs to the universal ribosomal protein uL10 family. As to quaternary structure, part of the 50S ribosomal subunit. Forms part of the ribosomal stalk which helps the ribosome interact with GTP-bound translation factors. Forms a heptameric L10(L12)2(L12)2(L12)2 complex, where L10 forms an elongated spine to which the L12 dimers bind in a sequential fashion.

Its function is as follows. Forms part of the ribosomal stalk, playing a central role in the interaction of the ribosome with GTP-bound translation factors. The chain is Large ribosomal subunit protein uL10 from Methanosarcina mazei (strain ATCC BAA-159 / DSM 3647 / Goe1 / Go1 / JCM 11833 / OCM 88) (Methanosarcina frisia).